Consider the following 597-residue polypeptide: Lipoprotein LpqB (597 aa).

The N-terminal stretch at 1–28 is a signal peptide; sequence MTPGRRSALLSRSVCGAIVLAVLVTVSG. Cysteine 29 carries the N-palmitoyl cysteine lipid modification. Residue cysteine 29 is the site of S-diacylglycerol cysteine attachment. Positions 38 to 51 are enriched in polar residues; the sequence is PQAIGTINRDSPGS. Positions 38–58 are disordered; sequence PQAIGTINRDSPGSSVAAPAP.

The protein belongs to the LpqB lipoprotein family.

The protein resides in the cell membrane. The protein is Lipoprotein LpqB of Rhodococcus jostii (strain RHA1).